We begin with the raw amino-acid sequence, 418 residues long: Putative ion-transport protein YfeO (418 aa).

12 helical membrane-spanning segments follow: residues 10-30, 54-74, 99-119, 120-140, 149-169, 186-206, 223-243, 258-278, 300-320, 322-342, 343-363, and 371-391; these read LLLS…LIVV, DSPF…GLVI, ALPG…SLGP, EHPI…RLLP, ILAS…AALI, LFAP…FFHP, ILSG…AVWC, VLML…AGPV, DYFL…ASGF, GGRI…LHEH, VPAV…VLVV, and LFMA…CIVM.

Belongs to the chloride channel (TC 2.A.49) family.

The protein resides in the cell membrane. The polypeptide is Putative ion-transport protein YfeO (Escherichia coli O7:K1 (strain IAI39 / ExPEC)).